A 433-amino-acid chain; its full sequence is Signal recognition particle 54 kDa protein (433 aa).

GTP is bound by residues 106–113 (GVEGSGKT), 186–190 (DTAGR), and 244–247 (TKMD).

This sequence belongs to the GTP-binding SRP family. SRP54 subfamily. Part of the signal recognition particle protein translocation system, which is composed of SRP and FtsY. Archaeal SRP consists of a 7S RNA molecule of 300 nucleotides and two protein subunits: SRP54 and SRP19.

It localises to the cytoplasm. It catalyses the reaction GTP + H2O = GDP + phosphate + H(+). In terms of biological role, involved in targeting and insertion of nascent membrane proteins into the cytoplasmic membrane. Binds to the hydrophobic signal sequence of the ribosome-nascent chain (RNC) as it emerges from the ribosomes. The SRP-RNC complex is then targeted to the cytoplasmic membrane where it interacts with the SRP receptor FtsY. The polypeptide is Signal recognition particle 54 kDa protein (Pyrobaculum arsenaticum (strain DSM 13514 / JCM 11321 / PZ6)).